Reading from the N-terminus, the 260-residue chain is Ribonuclease HII (260 aa).

One can recognise an RNase H type-2 domain in the interval 71–259 (RRIAGIDEAG…VREVLKASEQ (189 aa)). Residues Asp77, Glu78, and Asp169 each contribute to the a divalent metal cation site.

The protein belongs to the RNase HII family. The cofactor is Mn(2+). Mg(2+) is required as a cofactor.

It localises to the cytoplasm. It catalyses the reaction Endonucleolytic cleavage to 5'-phosphomonoester.. In terms of biological role, endonuclease that specifically degrades the RNA of RNA-DNA hybrids. The sequence is that of Ribonuclease HII from Geobacillus kaustophilus (strain HTA426).